Here is a 359-residue protein sequence, read N- to C-terminus: uncharacterized protein (359 aa).

This is an uncharacterized protein from Treponema pallidum (strain Nichols).